A 200-amino-acid polypeptide reads, in one-letter code: ATP-dependent Clp protease proteolytic subunit 2 (200 aa).

Serine 101 acts as the Nucleophile in catalysis. Residue histidine 126 is part of the active site.

Belongs to the peptidase S14 family. In terms of assembly, fourteen ClpP subunits assemble into 2 heptameric rings which stack back to back to give a disk-like structure with a central cavity, resembling the structure of eukaryotic proteasomes.

It localises to the cytoplasm. The catalysed reaction is Hydrolysis of proteins to small peptides in the presence of ATP and magnesium. alpha-casein is the usual test substrate. In the absence of ATP, only oligopeptides shorter than five residues are hydrolyzed (such as succinyl-Leu-Tyr-|-NHMec, and Leu-Tyr-Leu-|-Tyr-Trp, in which cleavage of the -Tyr-|-Leu- and -Tyr-|-Trp bonds also occurs).. In terms of biological role, cleaves peptides in various proteins in a process that requires ATP hydrolysis. Has a chymotrypsin-like activity. Plays a major role in the degradation of misfolded proteins. The sequence is that of ATP-dependent Clp protease proteolytic subunit 2 from Prochlorococcus marinus (strain NATL2A).